The primary structure comprises 641 residues: Protein BCAP (641 aa).

Coiled coils occupy residues 83–144 (HWPV…KQND), 191–270 (EKDN…RKLE), 299–375 (QKQK…EREQ), and 487–599 (FKLE…TLNA).

This sequence belongs to the ODF2 family.

It localises to the cytoplasm. Its subcellular location is the cytoskeleton. It is found in the microtubule organizing center. The protein resides in the centrosome. The protein localises to the centriole. It localises to the centriolar satellite. Its subcellular location is the cilium basal body. Functionally, acts as a suppressor of ciliogenesis, specifically, the initiation of ciliogenesis. This chain is Protein BCAP (odf2l), found in Xenopus laevis (African clawed frog).